Consider the following 567-residue polypeptide: Proline--tRNA ligase (567 aa).

The protein belongs to the class-II aminoacyl-tRNA synthetase family. ProS type 1 subfamily. In terms of assembly, homodimer.

It is found in the cytoplasm. The catalysed reaction is tRNA(Pro) + L-proline + ATP = L-prolyl-tRNA(Pro) + AMP + diphosphate. Catalyzes the attachment of proline to tRNA(Pro) in a two-step reaction: proline is first activated by ATP to form Pro-AMP and then transferred to the acceptor end of tRNA(Pro). As ProRS can inadvertently accommodate and process non-cognate amino acids such as alanine and cysteine, to avoid such errors it has two additional distinct editing activities against alanine. One activity is designated as 'pretransfer' editing and involves the tRNA(Pro)-independent hydrolysis of activated Ala-AMP. The other activity is designated 'posttransfer' editing and involves deacylation of mischarged Ala-tRNA(Pro). The misacylated Cys-tRNA(Pro) is not edited by ProRS. The sequence is that of Proline--tRNA ligase from Streptomyces coelicolor (strain ATCC BAA-471 / A3(2) / M145).